Reading from the N-terminus, the 715-residue chain is Lanosterol synthase erg7B (715 aa).

A PFTB 1 repeat occupies 111–153 (AIEIKNYLMARANPVDGGWGLHSEGDSSVFGTSLNYTVLRLLG). Residue Asp445 is the Proton donor of the active site. PFTB repeat units follow at residues 550-590 (IQRG…RSAG) and 599-640 (VRRG…VVQT).

This sequence belongs to the terpene cyclase/mutase family.

The protein localises to the lipid droplet. The protein resides in the endoplasmic reticulum membrane. The enzyme catalyses (S)-2,3-epoxysqualene = lanosterol. It participates in steroid metabolism; ergosterol biosynthesis. In terms of biological role, lanosterol synthase; part of the third module of ergosterol biosynthesis pathway that includes the late steps of the pathway. ERG7A and ERG7B catalyze the cyclization of (S)-2,3 oxidosqualene to lanosterol, a reaction that forms the sterol core. The third module or late pathway involves the ergosterol synthesis itself through consecutive reactions that mainly occur in the endoplasmic reticulum (ER) membrane. Firstly, the squalene synthase erg9 catalyzes the condensation of 2 farnesyl pyrophosphate moieties to form squalene, which is the precursor of all steroids. Squalene synthase is crucial for balancing the incorporation of farnesyl diphosphate (FPP) into sterol and nonsterol isoprene synthesis. Secondly, squalene is converted into lanosterol by the consecutive action of the squalene epoxidase erg1 and the lanosterol synthase erg7. Then, the delta(24)-sterol C-methyltransferase erg6 methylates lanosterol at C-24 to produce eburicol. Eburicol is the substrate of the sterol 14-alpha demethylase encoded by cyp51A and cyp51B, to yield 4,4,24-trimethyl ergosta-8,14,24(28)-trienol. The C-14 reductase erg24 then reduces the C14=C15 double bond which leads to 4,4-dimethylfecosterol. A sequence of further demethylations at C-4, involving the C-4 demethylation complex containing the C-4 methylsterol oxidases erg25A or erg25B, the sterol-4-alpha-carboxylate 3-dehydrogenase erg26 and the 3-keto-steroid reductase erg27, leads to the production of fecosterol via 4-methylfecosterol. The C-8 sterol isomerase erg2 then catalyzes the reaction which results in unsaturation at C-7 in the B ring of sterols and thus converts fecosterol to episterol. The sterol-C5-desaturase erg3B then catalyzes the introduction of a C-5 double bond in the B ring to produce 5-dehydroepisterol. The 2 other sterol-C5-desaturases, erg3A and erg3C, seem to be less important in ergosterol biosynthesis. The C-22 sterol desaturase erg5 further converts 5-dehydroepisterol into ergosta-5,7,22,24(28)-tetraen-3beta-ol by forming the C-22(23) double bond in the sterol side chain. Finally, ergosta-5,7,22,24(28)-tetraen-3beta-ol is substrate of the C-24(28) sterol reductases erg4A and erg4B to produce ergosterol. Possible alternative sterol biosynthetic pathways might exist from fecosterol to ergosterol, depending on the activities of the erg3 isoforms. The sequence is that of Lanosterol synthase erg7B from Aspergillus fumigatus (strain ATCC MYA-4609 / CBS 101355 / FGSC A1100 / Af293) (Neosartorya fumigata).